Consider the following 3166-residue polypeptide: Intermembrane lipid transfer protein VPS13A (3166 aa).

The region spanning 3–116 (FESVVVEVLN…LMETKQQELK (114 aa)) is the Chorein N-terminal domain. TPR repeat units follow at residues 212–245 (LFAYWNVNSEMFYLNDYDESLKALKNGIVNENIV) and 373–406 (LTSKKPSPEILMSLEELEKTLDVFNITIARQQAE). Phosphothreonine is present on threonine 831. Serine 835 is subject to Phosphoserine. The short motif at 838 to 844 (EFFDAPC) is the FFAT element. Positions 1343–1359 (APSSANKDPETMTSGVT) are enriched in polar residues. A disordered region spans residues 1343–1365 (APSSANKDPETMTSGVTSPPDHS). Serine 1410 is subject to Phosphoserine. TPR repeat units lie at residues 1806–1840 (AIVESDSEAENYKVPEYKTAISFYSRDQLNITLSK) and 1999–2034 (ISVFEGDTLLGIASPENEFNIPLASYRSSLSLVPED). Residues 2202 to 2447 (VAFHSPYWMV…VYYTWADPVG (246 aa)) form the SHR-BD domain. 2 required for mitochondrial localization regions span residues 2607–3166 (LQPH…SPRL) and 2743–3166 (EYEV…SPRL). 2 TPR repeats span residues 2716–2750 (ADLVTKAEVTEKTEVEHFHKDVEAFEQEYEVVSSV) and 2852–2890 (ILGLDVLGNPFGLIREFSEGVEAFFYEPYQGAIQGPEEF). The interval 2945–3019 (PAGLREGITR…SSTFQGIKRA (75 aa)) is required for lipid droplet localization.

It belongs to the VPS13 family. In terms of assembly, interacts (via FFAT motif) with VAPA and VAPB. Interacts with RAB7A. Interacts with XK.

It is found in the mitochondrion outer membrane. It localises to the endoplasmic reticulum membrane. The protein localises to the endosome membrane. The protein resides in the lysosome membrane. Its subcellular location is the lipid droplet. It is found in the golgi apparatus. It localises to the cytoplasmic vesicle. The protein localises to the secretory vesicle. The protein resides in the neuronal dense core vesicle. Functionally, mediates the transfer of lipids between membranes at organelle contact sites. Required for the formation or stabilization of ER-mitochondria contact sites which enable transfer of lipids between the ER and mitochondria. Negatively regulates lipid droplet size and motility. Required for efficient lysosomal protein degradation. The polypeptide is Intermembrane lipid transfer protein VPS13A (Mus musculus (Mouse)).